Reading from the N-terminus, the 502-residue chain is Glycerol kinase (502 aa).

Thr14 contacts ADP. ATP-binding residues include Thr14, Thr15, and Ser16. Thr14 contributes to the sn-glycerol 3-phosphate binding site. Residue Arg18 participates in ADP binding. Sn-glycerol 3-phosphate-binding residues include Arg84, Glu85, and Tyr136. 3 residues coordinate glycerol: Arg84, Glu85, and Tyr136. The residue at position 232 (His232) is a Phosphohistidine; by HPr. Asp246 contributes to the sn-glycerol 3-phosphate binding site. Positions 246 and 247 each coordinate glycerol. Residues Thr268 and Gly311 each contribute to the ADP site. ATP contacts are provided by Thr268, Gly311, Gln315, and Gly412. ADP is bound by residues Gly412 and Asn416.

This sequence belongs to the FGGY kinase family. In terms of assembly, homotetramer and homodimer (in equilibrium). The phosphoenolpyruvate-dependent sugar phosphotransferase system (PTS), including enzyme I, and histidine-containing protein (HPr) are required for the phosphorylation, which leads to the activation of the enzyme.

The catalysed reaction is glycerol + ATP = sn-glycerol 3-phosphate + ADP + H(+). It functions in the pathway polyol metabolism; glycerol degradation via glycerol kinase pathway; sn-glycerol 3-phosphate from glycerol: step 1/1. Activated by phosphorylation and inhibited by fructose 1,6-bisphosphate (FBP). Its function is as follows. Key enzyme in the regulation of glycerol uptake and metabolism. Catalyzes the phosphorylation of glycerol to yield sn-glycerol 3-phosphate. The chain is Glycerol kinase from Streptococcus pneumoniae (strain ATCC 700669 / Spain 23F-1).